A 349-amino-acid polypeptide reads, in one-letter code: Leukotriene B4 receptor 1 (349 aa).

Over 1–19 (MNTTSPAAPSSSGVSFISL) the chain is Extracellular. N-linked (GlcNAc...) asparagine glycosylation is present at N2. The chain crosses the membrane as a helical span at residues 20–42 (LVIIVLSVALAVGLPGNSFVVWS). Residues 43–54 (ILAKLRKRSVTA) are Cytoplasmic-facing. Residues 55–75 (LMVLHLALADLAVLLTAPFFL) form a helical membrane-spanning segment. Residues 76 to 91 (YSVAQGTWTFGLSSCR) lie on the Extracellular side of the membrane. Residues 92-113 (LFHYVCGVSMYASVLLIMTMSL) form a helical membrane-spanning segment. At 114–138 (DRSLAVALPFVSQKLRTKAVAWRVL) the chain is on the cytoplasmic side. The helical transmembrane segment at 139 to 159 (AGIWVMSVLLATPVLLYRTVH) threads the bilayer. Topologically, residues 160–179 (LGLNNRSLTCFLKYPSERHR) are extracellular. N164 carries an N-linked (GlcNAc...) asparagine glycan. Residues 180 to 200 (AFHLFFEVITGFLLPFLVVVA) form a helical membrane-spanning segment. Topologically, residues 201-222 (SYCDIGRRLRARRFRRSRRTGR) are cytoplasmic. The chain crosses the membrane as a helical span at residues 223 to 243 (LVALIILAFAAFWLPYHVVNL). At 244-269 (AEGFRAAAGKALGSGPVGRRLLLARH) the chain is on the extracellular side. The helical transmembrane segment at 270-290 (VLITLAFLSSSVNPLLYACAG) threads the bilayer. Topologically, residues 291–349 (GGLLRSAGVGFIAKLLEGTGSETSSSRRKGTLAQTLRGTPASPEPDPAESLTASTNPLE) are cytoplasmic. The segment at 311–349 (SETSSSRRKGTLAQTLRGTPASPEPDPAESLTASTNPLE) is disordered.

Belongs to the G-protein coupled receptor 1 family. Phosphorylated by GRK6 upon leukotriene B4 binding; which promotes desensitization.

Its subcellular location is the cell membrane. In terms of biological role, receptor for extracellular ATP &gt; UTP and ADP. The activity of this receptor is mediated by G proteins which activate a phosphatidylinositol-calcium second messenger system. May be the cardiac P2Y receptor involved in the regulation of cardiac muscle contraction through modulation of L-type calcium currents. Is a receptor for leukotriene B4, a potent chemoattractant involved in inflammation and immune response. The protein is Leukotriene B4 receptor 1 (LTB4R) of Bos taurus (Bovine).